The primary structure comprises 574 residues: Optineurin (574 aa).

Residues 1–33 (MSHQPLSCLTEKGDSPTETTGNGPPTLAHPNLD) form a disordered region. A coiled-coil region spans residues 38-170 (HELLQQMREL…VSELQLKLNS (133 aa)). The interaction with Rab8 stretch occupies residues 58 to 209 (MKLNNQAMKG…GPIRTDSIDT (152 aa)). The short motif at 176–181 (DSFVEI) is the LIR element. Ser-177 bears the Phosphoserine; by TBK1 mark. Ser-198 carries the phosphoserine modification. Residues 233–496 (CLREGNQKVE…ALQLAVLLKD (264 aa)) adopt a coiled-coil conformation. A compositionally biased stretch (basic and acidic residues) spans 262 to 286 (AKDRSETETQTEEHKEQEKEEEKSP). Residues 262 to 292 (AKDRSETETQTEEHKEQEKEEEKSPETVGSE) are disordered. Ser-336 is modified (phosphoserine). Residues 405–574 (KRRESEKVDK…LLIHVTDCII (170 aa)) form an interaction with HD region. The interval 406–515 (RRESEKVDKV…RQSLMEMQSR (110 aa)) is interaction with MYO6. The short motif at 468–473 (DFHAER) is the UBAN element. Ser-521 is modified (phosphoserine). The CCHC NOA-type zinc finger occupies 544–574 (QQNIPIHSCPKCGEVLPDIDTLLIHVTDCII). Residues Cys-552, Cys-555, His-568, and Cys-572 each coordinate Zn(2+).

As to quaternary structure, self-associates. Interacts with HD. Interacts with GTF3A. Interacts with MYO6. Interacts (via UBAN) with ubiquitinated TFRC. Interacts with GTP-bound Rab8 (RAB8A and/or RAB8B). Interacts with TBC1D17. Interacts with TBK1. Interacts with TRAF3. Binds to linear ubiquitin chains. Interacts with LC3 family members MAP1LC3A, MAP1LC3B, GABARAP, GABARAPL1 and GABARAPL2; OPTN phosphorylation increases the association (at least with MAP1LC3B). Interacts with RAB12; the interaction may be indirect. Interacts with TBK1; this interaction leads to the Golgi localization of TBK1 and its subsequent activation. Interacts with palmitoyltransferase ZDHHC17/HIP14; the interaction does not lead to palmitoylation of OPTN. Interacts with CYLD. Interacts with TOM1; the interaction is indirect and is mediated by MYO6, which acts as a bridge between TOM1 and OPTN. Interacts with USP12; the interaction is independent of USP12 deubiquitinase activity and may be involved in regulation of autophagic flux. Post-translationally, phosphorylated by TBK1, leading to restrict bacterial proliferation in case of infection. In terms of tissue distribution, present in aqueous humor of the eye (at protein level). Expressed in trabecular meshwork and astrocytes.

It is found in the cytoplasm. Its subcellular location is the perinuclear region. It localises to the golgi apparatus. The protein resides in the trans-Golgi network. The protein localises to the cytoplasmic vesicle. It is found in the autophagosome. Its subcellular location is the recycling endosome. Functionally, plays an important role in the maintenance of the Golgi complex, in membrane trafficking, in exocytosis, through its interaction with myosin VI and Rab8. Links myosin VI to the Golgi complex and plays an important role in Golgi ribbon formation. Negatively regulates the induction of IFNB in response to RNA virus infection. Plays a neuroprotective role in the eye and optic nerve. Probably part of the TNF-alpha signaling pathway that can shift the equilibrium toward induction of cell death. May act by regulating membrane trafficking and cellular morphogenesis via a complex that contains Rab8 and huntingtin (HD). Mediates the interaction of Rab8 with the probable GTPase-activating protein TBC1D17 during Rab8-mediated endocytic trafficking, such as that of transferrin receptor (TFRC/TfR); regulates Rab8 recruitment to tubules emanating from the endocytic recycling compartment. Autophagy receptor that interacts directly with both the cargo to become degraded and an autophagy modifier of the MAP1 LC3 family; targets ubiquitin-coated bacteria (xenophagy) and appears to function in the same pathway as SQSTM1 and CALCOCO2/NDP52. The polypeptide is Optineurin (OPTN) (Sus scrofa (Pig)).